Consider the following 487-residue polypeptide: 3-ketoacyl-CoA synthase 17 (487 aa).

The next 2 membrane-spanning stretches (helical) occupy residues 23–43 and 57–77; these read LITHFFKLMFLPLMAVLFMNV and STGFIFVITLAIVGSIVFFMS. One can recognise an FAE domain in the interval 74–363; that stretch reads FFMSRPRSIY…FFATFVAKRL (290 aa). Active-site residues include Cys-218, His-297, His-382, His-386, His-415, and Asn-419.

The protein belongs to the thiolase-like superfamily. Chalcone/stilbene synthases family. As to expression, expressed in flowers.

The protein localises to the membrane. The catalysed reaction is a very-long-chain acyl-CoA + malonyl-CoA + H(+) = a very-long-chain 3-oxoacyl-CoA + CO2 + CoA. It functions in the pathway lipid metabolism; fatty acid biosynthesis. Inhibited by K3 herbicides such as alachlor, allidochlor, anilofos, cafenstrole, fentrazamide and flufenacet. Strongly inhibited by metazachlor. Functionally, active on saturated acyl-CoAs up to C22. Mediates the synthesis of VLCFAs from 20 to 26 carbons in length (e.g. C20:1, C20, C24, C26). The chain is 3-ketoacyl-CoA synthase 17 from Arabidopsis thaliana (Mouse-ear cress).